The sequence spans 81 residues: Conotoxin Vc6.13 (81 aa).

Residues 1-19 (MEKLTILLLVAAVLMSIQA) form the signal peptide. A propeptide spanning residues 20 to 44 (LNQEQHQRAKINLLSKRKAPAERWW) is cleaved from the precursor. Cystine bridges form between cysteine 49-cysteine 63, cysteine 56-cysteine 67, and cysteine 62-cysteine 72.

This sequence belongs to the conotoxin O2 superfamily. As to expression, expressed by the venom duct.

The protein localises to the secreted. In terms of biological role, inhibits voltage-gated ion channels. This Conus victoriae (Queen Victoria cone) protein is Conotoxin Vc6.13.